Reading from the N-terminus, the 458-residue chain is Argininosuccinate lyase (458 aa).

This sequence belongs to the lyase 1 family. Argininosuccinate lyase subfamily.

The protein resides in the cytoplasm. It carries out the reaction 2-(N(omega)-L-arginino)succinate = fumarate + L-arginine. It participates in amino-acid biosynthesis; L-arginine biosynthesis; L-arginine from L-ornithine and carbamoyl phosphate: step 3/3. This is Argininosuccinate lyase from Pseudoalteromonas atlantica (strain T6c / ATCC BAA-1087).